The chain runs to 447 residues: Putative branched-chain amino acid carrier protein SERP0977 (447 aa).

A run of 12 helical transmembrane segments spans residues 5-25 (TWII…LIFP), 40-60 (ILAF…VGAL), 74-94 (PRFS…LFAI), 114-134 (GNLA…YLCL), 143-163 (IGSL…IKGF), 193-213 (GYLT…VNAI), 229-249 (IIAG…LGYI), 290-310 (LLGI…IVSV), 317-337 (IIPK…SFIL), 350-370 (VPVL…ILIA), 382-402 (IPLI…QGWI), and 417-437 (LEWF…SYFV).

Belongs to the branched chain amino acid transporter family.

Its subcellular location is the cell membrane. In terms of biological role, component of the transport system for branched-chain amino acids (leucine, isoleucine and valine), which is coupled to a proton motive force. This chain is Putative branched-chain amino acid carrier protein SERP0977, found in Staphylococcus epidermidis (strain ATCC 35984 / DSM 28319 / BCRC 17069 / CCUG 31568 / BM 3577 / RP62A).